The primary structure comprises 135 residues: Probable disulfide formation protein (135 aa).

The helical transmembrane segment at Ser7 to Tyr26 threads the bilayer. A disulfide bridge connects residues Cys36 and Cys39. 2 helical membrane-spanning segments follow: residues Tyr41–Glu60 and Tyr67–Cys84. Cysteines 96 and 101 form a disulfide. The chain crosses the membrane as a helical span at residues Gly109–Ala131.

The protein belongs to the DsbB family. BdbC subfamily.

The protein resides in the cell inner membrane. Functionally, required for disulfide bond formation in some proteins. The chain is Probable disulfide formation protein from Chlamydia trachomatis serovar D (strain ATCC VR-885 / DSM 19411 / UW-3/Cx).